We begin with the raw amino-acid sequence, 582 residues long: TRAF-type zinc finger domain-containing protein 1 (582 aa).

Alanine 2 carries the N-acetylalanine modification. The TRAF-type zinc finger occupies 27–103; that stretch reads IHEIHCQRNI…DLELSILKLK (77 aa). Serine 191 bears the Phosphoserine mark. The tract at residues 216-238 is disordered; the sequence is EEQERQERNRGQQPPKEGGEDGA. 8 positions are modified to phosphoserine: serine 278, serine 320, serine 326, serine 327, serine 409, serine 415, serine 430, and serine 470. Disordered regions lie at residues 402–509 and 522–582; these read EGIP…IAPG and PENI…EEEE. Polar residues-rich tracts occupy residues 454–471 and 486–504; these read PFNNMTATYNQLSRSTSG and LNNSDSQDIQGRNQNSQNG.

In terms of assembly, interacts with MAVS, TICAM1, TRAF1, TRAF2, TRAF3 and TRAF6.

Negative feedback regulator that controls excessive innate immune responses. Regulates both Toll-like receptor 4 (TLR4) and DDX58/RIG1-like helicases (RLH) pathways. May inhibit the LTR pathway by direct interaction with TRAF6 and attenuation of NF-kappa-B activation. May negatively regulate the RLH pathway downstream from MAVS and upstream of NF-kappa-B and IRF3. The chain is TRAF-type zinc finger domain-containing protein 1 (TRAFD1) from Macaca fascicularis (Crab-eating macaque).